The sequence spans 312 residues: Protein-glutamate methylesterase/protein-glutamine glutaminase (312 aa).

The 118-residue stretch at 5-122 (RVLSVDDSAL…REGMLAYSEM (118 aa)) folds into the Response regulatory domain. 4-aspartylphosphate is present on Asp56. A CheB-type methylesterase domain is found at 152–307 (LLSSEKLIAI…QQMLAKISAG (156 aa)). Residues Ser164, His190, and Asp249 contribute to the active site.

It belongs to the CheB family. In terms of processing, phosphorylated by CheA. Phosphorylation of the N-terminal regulatory domain activates the methylesterase activity.

It is found in the cytoplasm. It catalyses the reaction [protein]-L-glutamate 5-O-methyl ester + H2O = L-glutamyl-[protein] + methanol + H(+). It carries out the reaction L-glutaminyl-[protein] + H2O = L-glutamyl-[protein] + NH4(+). Functionally, involved in chemotaxis. Part of a chemotaxis signal transduction system that modulates chemotaxis in response to various stimuli. Catalyzes the demethylation of specific methylglutamate residues introduced into the chemoreceptors (methyl-accepting chemotaxis proteins or MCP) by CheR. Also mediates the irreversible deamidation of specific glutamine residues to glutamic acid. This Shigella boydii serotype 4 (strain Sb227) protein is Protein-glutamate methylesterase/protein-glutamine glutaminase.